We begin with the raw amino-acid sequence, 53 residues long: uncharacterized protein (53 aa).

The helical transmembrane segment at 13–35 threads the bilayer; that stretch reads FLLHSFTFPIAHCPSFSWASFFF.

It is found in the membrane. This is an uncharacterized protein from Saccharomyces cerevisiae (strain ATCC 204508 / S288c) (Baker's yeast).